The chain runs to 2492 residues: Polyketide synthase 19 (2492 aa).

A Ketosynthase family 3 (KS3) domain is found at 12-463; it reads REPIAIVGTS…GTNAHAIVES (452 aa). Active-site for beta-ketoacyl synthase activity residues include C202, H341, and H383. A malonyl-CoA:ACP transacylase (MAT) domain region spans residues 571 to 866; the sequence is VFTGQGAQWA…LEVGPHPALK (296 aa). An N-terminal hotdog fold region spans residues 967–1110; it reads HELLGRSVSH…GRIRLWLEQP (144 aa). The dehydratase (DH) domain stretch occupies residues 967-1270; sequence HELLGRSVSH…GVQMTAIGKP (304 aa). One can recognise a PKS/mFAS DH domain in the interval 967 to 1273; it reads HELLGRSVSH…MTAIGKPPDR (307 aa). The active-site Proton acceptor; for dehydratase activity is H1001. Residues 1125-1273 are C-terminal hotdog fold; that stretch reads MSELNMAQVY…MTAIGKPPDR (149 aa). D1183 (proton donor; for dehydratase activity) is an active-site residue. Residues 1431-1604 form a C-methyltransferase (CMeT) domain region; sequence LGAIVKQLGH…KTTGFSGVDI (174 aa). The tract at residues 2118–2293 is ketoreductase (KR) domain; it reads SYLLFGMTGD…AGSIVHISVL (176 aa). Positions 2404 to 2479 constitute a Carrier domain; the sequence is PILEKRFAQA…RVCDDVLVDW (76 aa). O-(pantetheine 4'-phosphoryl)serine is present on S2438.

Highly reducing polyketide synthase; part of the gene cluster that mediates the biosynthesis of fujikurins A-D, secondary metabolites playing a role during rice infection. The polyketide synthase PKS19 acts with the trans-enoyl reductase FFUJ_12240 and the polyketide transferase FFUJ_12241 to produce fujikurins, however, the biosynthesis pathway has not been identified yet. The chain is Polyketide synthase 19 from Gibberella fujikuroi (strain CBS 195.34 / IMI 58289 / NRRL A-6831) (Bakanae and foot rot disease fungus).